A 668-amino-acid chain; its full sequence is Ubiquitin ligase complex F-box protein UFO1 (668 aa).

Positions 5–51 (GLVLQDLPPEILINIFSHLDEKDLFTLQELSTHFRNLIHDEELWKNL) constitute an F-box domain. A Phosphoserine modification is found at serine 511. The residue at position 514 (threonine 514) is a Phosphothreonine. UIM domains lie at 547 to 566 (DEDE…YETQ), 583 to 602 (EDDE…DERR), and 651 to 668 (NVDE…SEIN). A compositionally biased stretch (polar residues) spans 564 to 578 (ETQTNSSANHGNNTN). Disordered stretches follow at residues 564-585 (ETQT…DEDD) and 599-639 (DERR…TENT).

Interacts with SKP1. Component of the probable SCF(UFO1) complex containing CDC53, SKP1, RBX1 and UFO1.

The protein operates within protein modification; protein ubiquitination. Substrate recognition component of a SCF (SKP1-CUL1-F-box protein) E3 ubiquitin-protein ligase complex which mediates the ubiquitination and subsequent proteasomal degradation of target proteins. Probably recognizes and binds to phosphorylated target proteins. In Saccharomyces cerevisiae (strain ATCC 204508 / S288c) (Baker's yeast), this protein is Ubiquitin ligase complex F-box protein UFO1 (UFO1).